The sequence spans 582 residues: V-type ATP synthase alpha chain (582 aa).

ATP is bound at residue 231–238 (GPFGSGKT).

It belongs to the ATPase alpha/beta chains family.

The enzyme catalyses ATP + H2O + 4 H(+)(in) = ADP + phosphate + 5 H(+)(out). In terms of biological role, produces ATP from ADP in the presence of a proton gradient across the membrane. The V-type alpha chain is a catalytic subunit. This chain is V-type ATP synthase alpha chain, found in Deinococcus deserti (strain DSM 17065 / CIP 109153 / LMG 22923 / VCD115).